Here is a 164-residue protein sequence, read N- to C-terminus: UPF0303 protein RHECIAT_CH0003058 (164 aa).

Belongs to the UPF0303 family.

In Rhizobium etli (strain CIAT 652), this protein is UPF0303 protein RHECIAT_CH0003058.